The primary structure comprises 379 residues: Stimulator of interferon genes protein (379 aa).

The Cytoplasmic portion of the chain corresponds to 1 to 17; that stretch reads MPHSSLHPSIPCPRGHG. The mediates interaction with ZDHHC1 and ZDHHC11 stretch occupies residues 1–190; the sequence is MPHSSLHPSI…TYNQHYNNLL (190 aa). The helical transmembrane segment at 18 to 34 threads the bilayer; it reads AQKAALVLLSACLVTLW. Lysine 20 is covalently cross-linked (Glycyl lysine isopeptide (Lys-Gly) (interchain with G-Cter in ubiquitin)). Residues 35–44 lie on the Lumenal side of the membrane; sequence GLGEPPEHTL. Residues 45–69 traverse the membrane as a helical segment; the sequence is RYLVLHLASLQLGLLLNGVCSLAEE. The Cytoplasmic portion of the chain corresponds to 70-91; sequence LRHIHSRYRGSYWRTVRACLGC. Residues cysteine 88 and cysteine 91 are each lipidated (S-palmitoyl cysteine). A helical membrane pass occupies residues 92–106; it reads PLRRGALLLLSIYFY. Residues 107 to 116 lie on the Lumenal side of the membrane; that stretch reads YSLPNAVGPP. The helical transmembrane segment at 117 to 134 threads the bilayer; that stretch reads FTWMLALLGLSQALNILL. Residues 135-379 are Cytoplasmic-facing; that stretch reads GLKGLAPAEI…KPLPLRTDFS (245 aa). Lysine 150 is covalently cross-linked (Glycyl lysine isopeptide (Lys-Gly) (interchain with G-Cter in ubiquitin)). Residues 153-340 are cyclic dinucleotide-binding domain (CBD); that stretch reads FNVAHGLAWS…RHLRQEEKEE (188 aa). Residues serine 162 and tyrosine 167 each contribute to the 2',3'-cGAMP site. Residues serine 162 and tyrosine 167 each contribute to the 3',3'-c-di-GMP site. Tyrosine 167 contacts 2',3'-cUAMP. Phosphothreonine is present on threonine 229. A Glycyl lysine isopeptide (Lys-Gly) (interchain with G-Cter in ubiquitin) cross-link involves residue lysine 236. Arginine 238 serves as a coordination point for 2',3'-cGAMP. Arginine 238 contributes to the 2',3'-cUAMP binding site. Residues 238 to 241 and threonine 263 contribute to the 3',3'-c-di-GMP site; that span reads RVYS. A Phosphoserine modification is found at serine 241. Threonine 263 is a 2',3'-cGAMP binding site. Threonine 263 contacts 2',3'-cUAMP. A Glycyl lysine isopeptide (Lys-Gly) (interchain with G-Cter in SUMO) cross-link involves residue lysine 338. A C-terminal tail (CTT) region spans residues 340–379; sequence EVTVGSLKTSAVPSTSTMSQEPELLISGMEKPLPLRTDFS. The tract at residues 341 to 370 is disordered; it reads VTVGSLKTSAVPSTSTMSQEPELLISGMEK. The segment covering 345–359 has biased composition (polar residues); it reads SLKTSAVPSTSTMSQ. Residue threonine 354 is modified to Phosphothreonine. Serine 355 carries the post-translational modification Phosphoserine; by MAP3K7. Threonine 356 carries the phosphothreonine modification. Phosphoserine; by TBK1 is present on residues serine 358 and serine 366. The short motif at 363-366 is the pLxIS motif element; the sequence is LLIS.

The protein belongs to the STING family. Homodimer; forms a homodimer in absence of cyclic nucleotide (c-di-GMP or cGAMP); 'Lys-63'-linked ubiquitination at Lys-150 is required for homodimerization. Homotetramer; in presence of cyclic nucleotide (c-di-GMP or cGAMP), forms tetramers and higher-order oligomers through side-by-side packing. Interacts (when phosphorylated) with IRF3; following activation and phosphorylation on the pLxIS motif by TBK1, recruits IRF3. Interacts with RIGI, MAVS and SSR2. Interacts with RNF5 and TRIM56. Interacts with TBK1; when homodimer, leading to subsequent production of IFN-beta. Interacts with IFIT1 and IFIT2. Interacts with TRIM29; this interaction induces STING1 ubiquitination and subsequent degradation. Associates with the MHC-II complex. Interacts with STEEP1; interaction takes place upon cGAMP-activation and STING1 phosphorylation by MAP3K7/TAK1 and promotes STING1 translocation to COPII vesicles. Interacts with SEC24A, SEC24B, and SEC24C; promoting translocation to COPII vesicles. Interacts (when ubiquitinated) with SQSTM1; leading to relocalization to autophagosomes. Interacts with SURF4. Interacts with HNRNPA2B1. Interacts with ZDHHC1; ZDHHC1 constitutively interacts with STING1 and in presence of DNA viruses activates it by promoting its cGAMP-induced oligomerization and the recruitment of downstream signaling components. Interacts with ZDHHC11; in presence of DNA viruses promotes the recruitment of IRF3 to STING1. Interacts with TOMM70. Interacts with isoform IFI16-beta of IFI16. Interacts with TAB1; promoting recruitment of TAB1 to the endoplasmic reticulum membrane and subsequent activation of MAP3K7/TAK1. Interacts (via transmembrane domain) with TMEM203. Interacts with DDX41. Interacts with TMEM120A (via C-terminal domain); regulates the trafficking of STING1 from the ER to the ER-Golgi intermediate compartment to elicit antiviral effects. In terms of assembly, (Microbial infection) Interacts with human papillomavirus (HPV) protein E7. As to quaternary structure, (Microbial infection) Interacts with adenovirus early E1A protein. (Microbial infection) Interacts with herpes simplex virus 1 protein ICP34.5; this interaction inhibits the intracellular DNA sensing pathway. In terms of assembly, (Microbial infection) Interacts with Chikungunya virus non-structural protein 1; this interaction results in inhibition of cGAS-STING signaling and increased levels of palmitoylated nsP1 and protein stabilization. As to quaternary structure, (Microbial infection) Interacts with human cytomegalovirus proteins UL94, UL42 and UL138; these interactions result in the inhibition of cGAS-STING signaling. (Microbial infection) Interacts with varivella virus protein 39; this interaction results in the inhibition of cGAS-STING signaling. Post-translationally, phosphorylation by TBK1 leads to activation and production of IFN-beta. Following cyclic nucleotide (c-di-GMP or cGAMP)-binding, activation and translocation from the endoplasmic reticulum, STING1 is phosphorylated by TBK1 at Ser-366 in the pLxIS motif. The phosphorylated pLxIS motif constitutes an IRF3-binding motif, leading to recruitment of the transcription factor IRF3 to induce type-I interferons and other cytokines. The phosphorylated pLxIS motif facilitates SENP2 recruitment during late phase of viral infection. Phosphorylated on tyrosine residues upon MHC-II aggregation. Dephosphorylation by PPP6C leads to inactivation and decreased production of IFN-beta. Phosphorylation at Ser-358 is also required to activate IRF3. Phosphorylation at Ser-355 by MAP3K7/TAK1 facilitates its interaction with STEEP1, promoting STING1 translocation to COPII vesicles. In terms of processing, ubiquitinated. Ubiquitinated via 'Lys-63'-linked ubiquitin chains in response to double-stranded DNA treatment, leading to relocalization to autophagosomes and subsequent degradation; this process is dependent on SQSTM1. 'Lys-63'-linked ubiquitination mediated by TRIM56 at Lys-150 promotes homodimerization and recruitment of the antiviral kinase TBK1 and subsequent production of IFN-beta. 'Lys-48'-linked polyubiquitination at Lys-150 occurring after viral infection is mediated by RNF5 and leads to proteasomal degradation. 'Lys-11'-linked polyubiquitination at Lys-150 by RNF26 leads to stabilize STING1: it protects STING1 from RNF5-mediated 'Lys-48'-linked polyubiquitination. 'Lys-33'-linked and 'Lys-48'-linked deubiquitinated by USP20; leading to its stabilization and promotion of innate antiviral response. 'Lys-48'-linked deubiquitinated by USP44; leading to its stabilization and promotion of innate antiviral response. Deubiquitinated by USP13; leading to inhibition of innate antiviral response. 'Lys-63'-linked deubiquitinated by USP49; leading to inhibition of the subsequent recruitment of TBK1 to the signaling complex. 'Lys-63'-linked ubiquitination mediated by RNF39 promotes the activation of the cGAS-STING pathway. MARCHF5-mediated ubiquitination prevents the oxidation-induced polymer formation. (Microbial infection) Deubiquitinated by Epstein-Barr virus BPLF1 on both 'Lys-48' and 'Lys-63'-linked ubiquitin chains; leading to inhibition of cGAS-STING signaling. Post-translationally, sumoylated at Lys-338 by TRIM38 during the early phase of viral infection, promoting its stability by preventing its relocalization to autophagosomes and subsequent degradation. Desumoylated by SENP2 during the late phase of viral infection. In terms of processing, palmitoylation takes place in the Golgi apparatus and creates a platform for the recruitment of TBK1. In terms of tissue distribution, ubiquitously expressed. Expressed in skin endothelial cells, alveolar type 2 pneumocytes, bronchial epithelium and alveolar macrophages.

Its subcellular location is the endoplasmic reticulum membrane. The protein localises to the cytoplasm. The protein resides in the perinuclear region. It is found in the endoplasmic reticulum-Golgi intermediate compartment membrane. It localises to the golgi apparatus membrane. Its subcellular location is the cytoplasmic vesicle. The protein localises to the autophagosome membrane. The protein resides in the mitochondrion outer membrane. It is found in the cell membrane. It carries out the reaction H(+)(in) = H(+)(out). Activated upon binding to the hydrolysis-resistant 2'3'-cG(s)A(s)MP, an analog of cGAMP, in which phosphodiester linkages are replaced by phosphothioate linkages. Specifically inhibited by small-molecule H-151 (N-(4-ethylphenyl)-N'-1H-indol-3-yl-urea), which covalently binds Cys-91 and prevents palmitoylation and subsequent activation of STING1. In contrast to mouse protein, not activated by anticancer molecule 5,6-dimethylxanthenone 4-acetic acid (DMXAA). Inhibited by compound 18 ([(3S,4S)-2-(4-tert-butyl-3-chlorophenyl)-3-(2,3-dihydro-1,4-benzodioxin-6-yl)-7-fluoro-1-oxo-1,2,3,4-tetrahydroisoquinolin-4-yl]acetate), a competitive inhibitor with slow dissociation kinetics and good oral bioavailability. Homooligomerization and ability to promote the production of type I interferons is activated by C53, a small benzothiazinone-like compound that binds to the transmembrane regions. in the area of the putative pore. In contrast, compound C53, directly inhibits the proton channel activity and facilitate MAP1LC3B/LC3B lipidation and autophagosome formation. Functionally, facilitator of innate immune signaling that acts as a sensor of cytosolic DNA from bacteria and viruses and promotes the production of type I interferon (IFN-alpha and IFN-beta). Innate immune response is triggered in response to non-CpG double-stranded DNA from viruses and bacteria delivered to the cytoplasm. Acts by binding cyclic dinucleotides: recognizes and binds cyclic di-GMP (c-di-GMP), a second messenger produced by bacteria, cyclic UMP-AMP (2',3'-cUAMP), and cyclic GMP-AMP (cGAMP), a messenger produced by CGAS in response to DNA virus in the cytosol. Upon binding to c-di-GMP, cUAMP or cGAMP, STING1 oligomerizes, translocates from the endoplasmic reticulum and is phosphorylated by TBK1 on the pLxIS motif, leading to recruitment and subsequent activation of the transcription factor IRF3 to induce expression of type I interferon and exert a potent anti-viral state. Exhibits 2',3' phosphodiester linkage-specific ligand recognition: can bind both 2'-3' linked cGAMP (2'-3'-cGAMP) and 3'-3' linked cGAMP but is preferentially activated by 2'-3' linked cGAMP. The preference for 2'-3'-cGAMP, compared to other linkage isomers is probably due to the ligand itself, whichs adopts an organized free-ligand conformation that resembles the STING1-bound conformation and pays low energy costs in changing into the active conformation. In addition to promote the production of type I interferons, plays a direct role in autophagy. Following cGAMP-binding, STING1 buds from the endoplasmic reticulum into COPII vesicles, which then form the endoplasmic reticulum-Golgi intermediate compartment (ERGIC). The ERGIC serves as the membrane source for WIPI2 recruitment and LC3 lipidation, leading to formation of autophagosomes that target cytosolic DNA or DNA viruses for degradation by the lysosome. Promotes autophagy by acting as a proton channel that directs proton efflux from the Golgi to facilitate MAP1LC3B/LC3B lipidation. The autophagy- and interferon-inducing activities can be uncoupled and autophagy induction is independent of TBK1 phosphorylation. Autophagy is also triggered upon infection by bacteria: following c-di-GMP-binding, which is produced by live Gram-positive bacteria, promotes reticulophagy. May be involved in translocon function, the translocon possibly being able to influence the induction of type I interferons. May be involved in transduction of apoptotic signals via its association with the major histocompatibility complex class II (MHC-II). (Microbial infection) Antiviral activity is antagonized by oncoproteins, such as papillomavirus (HPV) protein E7 and adenovirus early E1A protein. Such oncoproteins prevent the ability to sense cytosolic DNA. The protein is Stimulator of interferon genes protein of Homo sapiens (Human).